The primary structure comprises 236 residues: Purine nucleoside phosphorylase DeoD-type (236 aa).

His-5 contributes to the a purine D-ribonucleoside binding site. Phosphate is bound by residues Gly-21, Arg-25, Arg-44, and Arg-88–Thr-91. A purine D-ribonucleoside-binding positions include Glu-180–Glu-182 and Ser-204–Asp-205. Asp-205 functions as the Proton donor in the catalytic mechanism.

It belongs to the PNP/UDP phosphorylase family. Homohexamer; trimer of homodimers.

It catalyses the reaction a purine D-ribonucleoside + phosphate = a purine nucleobase + alpha-D-ribose 1-phosphate. The enzyme catalyses a purine 2'-deoxy-D-ribonucleoside + phosphate = a purine nucleobase + 2-deoxy-alpha-D-ribose 1-phosphate. Catalyzes the reversible phosphorolytic breakdown of the N-glycosidic bond in the beta-(deoxy)ribonucleoside molecules, with the formation of the corresponding free purine bases and pentose-1-phosphate. The protein is Purine nucleoside phosphorylase DeoD-type of Shewanella loihica (strain ATCC BAA-1088 / PV-4).